We begin with the raw amino-acid sequence, 96 residues long: UPF0235 protein YggU (96 aa).

It belongs to the UPF0235 family.

This Salmonella typhimurium (strain LT2 / SGSC1412 / ATCC 700720) protein is UPF0235 protein YggU.